The chain runs to 609 residues: Albumin (609 aa).

Positions methionine 1 to serine 18 are cleaved as a signal peptide. The propeptide occupies arginine 19 to arginine 24. 3 consecutive Albumin domains span residues arginine 19–arginine 210, aspartate 211–proline 403, and leucine 404–alanine 601. Histidine 27 lines the Cu cation pocket. Residue serine 29 is modified to Phosphoserine. Ca(2+) contacts are provided by glutamate 30 and aspartate 37. Cysteine 77 and cysteine 86 are oxidised to a cystine. A phosphoserine mark is found at serine 82 and serine 89. Position 91 (histidine 91) interacts with Zn(2+). 6 cysteine pairs are disulfide-bonded: cysteine 99–cysteine 115, cysteine 114–cysteine 125, cysteine 148–cysteine 193, cysteine 192–cysteine 201, cysteine 224–cysteine 270, and cysteine 269–cysteine 277. Position 107 is a phosphothreonine (threonine 107). Lysine 229 bears the N6-succinyllysine mark. Lysine 264 is a binding site for (4Z,15Z)-bilirubin IXalpha. Glutamate 268 lines the Ca(2+) pocket. Zn(2+) is bound by residues histidine 271 and aspartate 273. Ca(2+) is bound by residues aspartate 273, glutamate 276, aspartate 279, and aspartate 283. 8 disulfide bridges follow: cysteine 289-cysteine 303, cysteine 302-cysteine 313, cysteine 340-cysteine 385, cysteine 384-cysteine 393, cysteine 416-cysteine 462, cysteine 461-cysteine 472, cysteine 485-cysteine 501, and cysteine 500-cysteine 511. Serine 297 carries the post-translational modification Phosphoserine. Serine 443 is modified (phosphoserine). A phosphothreonine mark is found at threonine 444 and threonine 446. N6-succinyllysine is present on lysine 460. Phosphoserine is present on serine 513. 2 disulfide bridges follow: cysteine 538–cysteine 583 and cysteine 582–cysteine 591. Lysine 543 is subject to N6-succinyllysine. Lysine 558 is modified (N6-methyllysine). Threonine 570 is modified (phosphothreonine). Lysine 588 carries the post-translational modification N6-succinyllysine.

The protein belongs to the ALB/AFP/VDB family. As to quaternary structure, interacts with FCGRT; this interaction regulates ALB homeostasis. Interacts with TASOR. In plasma, occurs in a covalently-linked complex with chromophore-bound alpha-1-microglobulin; this interaction does not prevent fatty acid binding to ALB. Post-translationally, phosphorylated by FAM20C in the extracellular medium. In terms of tissue distribution, plasma.

The protein resides in the secreted. Its function is as follows. Binds water, Ca(2+), Na(+), K(+), fatty acids, hormones, bilirubin and drugs. Its main function is the regulation of the colloidal osmotic pressure of blood. Major zinc transporter in plasma, typically binds about 80% of all plasma zinc. Major calcium and magnesium transporter in plasma, binds approximately 45% of circulating calcium and magnesium in plasma. Potentially has more than two calcium-binding sites and might additionally bind calcium in a non-specific manner. The shared binding site between zinc and calcium at residue Asp-273 suggests a crosstalk between zinc and calcium transport in the blood. The rank order of affinity is zinc &gt; calcium &gt; magnesium. Binds to the bacterial siderophore enterobactin and inhibits enterobactin-mediated iron uptake of E.coli from ferric transferrin, and may thereby limit the utilization of iron and growth of enteric bacteria such as E.coli. Does not prevent iron uptake by the bacterial siderophore aerobactin. This chain is Albumin (ALB), found in Pongo abelii (Sumatran orangutan).